Consider the following 142-residue polypeptide: U1 small nuclear ribonucleoprotein C (142 aa).

The segment at 4 to 36 adopts a Matrin-type zinc-finger fold; that stretch reads YYCDYCDTFLTHDSPSVRKTHNGGRKHKDNVRM.

Belongs to the U1 small nuclear ribonucleoprotein C family. U1 snRNP is composed of the 7 core Sm proteins B/B', D1, D2, D3, E, F and G that assemble in a heptameric protein ring on the Sm site of the small nuclear RNA to form the core snRNP, and at least 3 U1 snRNP-specific proteins U1-70K, U1-A and U1-C. U1-C interacts with U1 snRNA and the 5' splice-site region of the pre-mRNA.

Its subcellular location is the nucleus. Its function is as follows. Component of the spliceosomal U1 snRNP, which is essential for recognition of the pre-mRNA 5' splice-site and the subsequent assembly of the spliceosome. U1-C is directly involved in initial 5' splice-site recognition for both constitutive and regulated alternative splicing. The interaction with the 5' splice-site seems to precede base-pairing between the pre-mRNA and the U1 snRNA. Stimulates commitment or early (E) complex formation by stabilizing the base pairing of the 5' end of the U1 snRNA and the 5' splice-site region. This is U1 small nuclear ribonucleoprotein C from Caenorhabditis briggsae.